We begin with the raw amino-acid sequence, 240 residues long: Mitochondrial transcription rescue factor 1 (240 aa).

The N-terminal 84 residues, 1–84, are a transit peptide targeting the mitochondrion; it reads MAMASVKLLA…ECIFPFSVRL (84 aa). Positions 95-127 are disordered; sequence KKSLQKVDEEDSDEESHHDEMSEQEEELEDDPT. A phosphoserine mark is found at serine 106 and serine 116. A compositionally biased stretch (acidic residues) spans 116–126; that stretch reads SEQEEELEDDP. The S4 RNA-binding domain occupies 142 to 217; it reads FRYDVVLKTG…LKKVFEEKTE (76 aa).

As to quaternary structure, monomer. Interacts with POLRMT. Interacts (via S4 domain) with MTRFR (via C-terminus). Associates with mitoribosomal S39 large subunit, peptidyl tRNA and nascent chain.

It is found in the mitochondrion matrix. Mitochondrial RNA-binding protein involved in mitochondrial transcription regulation. Functions as a protective factor to maintain proper mitochondrial RNA level during stress. Acts at the transcription level and its protective function depends on its RNA binding ability. Part of a mitoribosome-associated quality control pathway that prevents aberrant translation by responding to interruptions during elongation. As heterodimer with MTRF, ejects the unfinished nascent chain and peptidyl transfer RNA (tRNA), respectively, from stalled ribosomes. Recruitment of mitoribosome biogenesis factors to these quality control intermediates suggests additional roles for MTRES1 and MTRF during mitoribosome rescue. This chain is Mitochondrial transcription rescue factor 1, found in Homo sapiens (Human).